Consider the following 149-residue polypeptide: UPF0260 protein Pput_1301 (149 aa).

The protein belongs to the UPF0260 family.

The chain is UPF0260 protein Pput_1301 from Pseudomonas putida (strain ATCC 700007 / DSM 6899 / JCM 31910 / BCRC 17059 / LMG 24140 / F1).